Reading from the N-terminus, the 415-residue chain is Casein kinase I isoform delta (415 aa).

One can recognise a Protein kinase domain in the interval 9-277 (YRLGRKIGSG…YLRQLFRNLF (269 aa)). Residues 15–23 (IGSGSFGDI) and lysine 38 each bind ATP. The Proton acceptor role is filled by aspartate 128. A centrosomal localization signal (CLS) region spans residues 278–364 (HRQGFSYDYV…TSPRPVSGME (87 aa)). Over residues 301 to 315 (ADDAERERRDREERL) the composition is skewed to basic and acidic residues. The segment at 301-415 (ADDAERERRD…SSGLQSVVHR (115 aa)) is disordered. Positions 317–342 (HSRNPATRGLPSTASGRLRGTQEVAP) are autoinhibitory. Phosphoserine is present on residues serine 328 and serine 331. The segment covering 347–358 (TPTSHTANTSPR) has biased composition (polar residues). At serine 370 the chain carries Phosphoserine. Arginine 375 bears the Omega-N-methylarginine mark. A compositionally biased stretch (polar residues) spans 380–400 (NISSSDLTGRQDTSRMSTSQI). Phosphoserine occurs at positions 382, 383, 384, 407, and 411.

The protein belongs to the protein kinase superfamily. CK1 Ser/Thr protein kinase family. Casein kinase I subfamily. In terms of assembly, monomer. Component of the circadian core oscillator, which includes the CRY proteins, CLOCK, or NPAS2, ARTNL/BMAL1 or ARTNL2/BMAL2, CSNK1D and/or CSNK1E, TIMELESS and the PER proteins. Interacts with DNMT1 and MAP1A. Interacts directly with PER1 and PER2 which may lead to their degradation. Interacts with MAPT/TAU, SNAPIN, DBNDD2, AIB1/NCOA3 and ESR1. Interacts with AKAP9/AKAP450; this interaction promotes centrosomal subcellular location. Binds to tubulins in mitotic cells upon DNA damage. Interacts with GJA1. Interacts with DDX3X; this interaction enhances CSNK1D kinase activity in vitro, but it is unclear whether this interaction is physiologically relevant. Interacts with FAM83A, FAM83B, FAM83E and FAM83H (via DUF1669). In terms of processing, autophosphorylated on serine and threonine residues; this autophosphorylation represses activity. Reactivated by phosphatase-mediated dephosphorylation. May be dephosphorylated by PP1.

Its subcellular location is the cytoplasm. The protein resides in the nucleus. The protein localises to the cytoskeleton. It localises to the microtubule organizing center. It is found in the centrosome. Its subcellular location is the perinuclear region. The protein resides in the cell membrane. The protein localises to the spindle. It localises to the golgi apparatus. The catalysed reaction is L-seryl-[protein] + ATP = O-phospho-L-seryl-[protein] + ADP + H(+). It catalyses the reaction L-threonyl-[protein] + ATP = O-phospho-L-threonyl-[protein] + ADP + H(+). It carries out the reaction L-seryl-[tau protein] + ATP = O-phospho-L-seryl-[tau protein] + ADP + H(+). The enzyme catalyses L-threonyl-[tau protein] + ATP = O-phospho-L-threonyl-[tau protein] + ADP + H(+). With respect to regulation, drug-mediated inhibition leads to a delay of the oscillations with the magnitude of this effect dependent upon the timing of drug administration. Inhibited by phosphorylation. Exhibits substrate-dependent heparin activation. Functionally, essential serine/threonine-protein kinase that regulates diverse cellular growth and survival processes including Wnt signaling, DNA repair and circadian rhythms. It can phosphorylate a large number of proteins. Casein kinases are operationally defined by their preferential utilization of acidic proteins such as caseins as substrates. Phosphorylates connexin-43/GJA1, MAP1A, SNAPIN, MAPT/TAU, TOP2A, DCK, HIF1A, EIF6, p53/TP53, DVL2, DVL3, ESR1, AIB1/NCOA3, DNMT1, PKD2, YAP1, PER1 and PER2. Central component of the circadian clock. In balance with PP1, determines the circadian period length through the regulation of the speed and rhythmicity of PER1 and PER2 phosphorylation. Controls PER1 and PER2 nuclear transport and degradation. YAP1 phosphorylation promotes its SCF(beta-TRCP) E3 ubiquitin ligase-mediated ubiquitination and subsequent degradation. DNMT1 phosphorylation reduces its DNA-binding activity. Phosphorylation of ESR1 and AIB1/NCOA3 stimulates their activity and coactivation. Phosphorylation of DVL2 and DVL3 regulates WNT3A signaling pathway that controls neurite outgrowth. Phosphorylates NEDD9/HEF1. EIF6 phosphorylation promotes its nuclear export. Triggers down-regulation of dopamine receptors in the forebrain. Activates DCK in vitro by phosphorylation. TOP2A phosphorylation favors DNA cleavable complex formation. May regulate the formation of the mitotic spindle apparatus in extravillous trophoblast. Modulates connexin-43/GJA1 gap junction assembly by phosphorylation. Probably involved in lymphocyte physiology. Regulates fast synaptic transmission mediated by glutamate. In Bos taurus (Bovine), this protein is Casein kinase I isoform delta (CSNK1D).